A 169-amino-acid chain; its full sequence is Fumarase E (169 aa).

The protein belongs to the MtlR/FumE family. As to quaternary structure, homodimer.

It catalyses the reaction (S)-malate = fumarate + H2O. Functionally, in vitro catalyzes the addition of water to fumarate, forming malate. Cannot catalyze the reverse reaction. Cannot use the cis-isomer maleate as substrate. This is Fumarase E from Shigella flexneri.